We begin with the raw amino-acid sequence, 185 residues long: Ribosome-recycling factor (185 aa).

The disordered stretch occupies residues 127–158 (AVRNTRQDANNKVKKLEKDKEISEDESKKAQE).

This sequence belongs to the RRF family.

The protein localises to the cytoplasm. Functionally, responsible for the release of ribosomes from messenger RNA at the termination of protein biosynthesis. May increase the efficiency of translation by recycling ribosomes from one round of translation to another. The protein is Ribosome-recycling factor of Helicobacter pylori (strain G27).